The following is a 78-amino-acid chain: Large ribosomal subunit protein bL28 (78 aa).

The protein belongs to the bacterial ribosomal protein bL28 family.

The polypeptide is Large ribosomal subunit protein bL28 (Prochlorococcus marinus (strain MIT 9515)).